The sequence spans 560 residues: Oxygen-dependent choline dehydrogenase (560 aa).

FAD is bound at residue 6–35; that stretch reads DYIIVGAGSAGCVLADRLSESGDHSVLLLE. The active-site Proton acceptor is the His-470.

The protein belongs to the GMC oxidoreductase family. Requires FAD as cofactor.

The catalysed reaction is choline + A = betaine aldehyde + AH2. It carries out the reaction betaine aldehyde + NAD(+) + H2O = glycine betaine + NADH + 2 H(+). It functions in the pathway amine and polyamine biosynthesis; betaine biosynthesis via choline pathway; betaine aldehyde from choline (cytochrome c reductase route): step 1/1. Functionally, involved in the biosynthesis of the osmoprotectant glycine betaine. Catalyzes the oxidation of choline to betaine aldehyde and betaine aldehyde to glycine betaine at the same rate. The polypeptide is Oxygen-dependent choline dehydrogenase (Vibrio vulnificus (strain YJ016)).